The following is a 554-amino-acid chain: MTMEPNPTSDHILDWLEGSVSFFPSFLDDPYNNGYIHEYEIWNQNQDISNQYQIDANTNSSNATNSTTNIVAASTTTSTTSLEPNSFNNIPFSDLPKKRNAEDELSLKKQPQNQKNKRLKSRPMNESDNGDAALEGTVVRKSGGNKKGAAKANGSNSNNGNNKDGRWAEQLLNPCAVAITGGNLNRVQHLLYVLHELASTTGDANHRLAAHGLRALTHHLSSSSSSTPSGTITFASTEPRFFQKSLLKFYEFSPWFSFPNNIANASILQVLAEEPNNLRTLHILDIGVSHGVQWPTFLEALSRRPGGPPPLVRLTVVNASSSTENDQNMETPFSIGPCGDTFSSGLLGYAQSLNVNLQIKKLDNHPLQTLNAKSVDTSSDETLIVCAQFRLHHLNHNNPDERSEFLKVLRGMEPKGVILSENNMECCCSSCGDFATGFSRRVEYLWRFLDSTSSAFKNRDSDERKMMEGEAAKALTNQREMNERREKWCERMKEAGFAGEVFGEDAIDGGRALLRKYDNNWEMKVEENSTSVELWWKSQPVSFCSLWKLDKQPE.

The tract at residues 76-165 (TTSTTSLEPN…NSNNGNNKDG (90 aa)) is disordered. Polar residues predominate over residues 82 to 91 (LEPNSFNNIP). The segment covering 95–107 (LPKKRNAEDELSL) has biased composition (basic and acidic residues). Over residues 150 to 162 (AKANGSNSNNGNN) the composition is skewed to low complexity. The GRAS domain occupies 159 to 548 (NGNNKDGRWA…QPVSFCSLWK (390 aa)). The interval 166 to 227 (RWAEQLLNPC…HHLSSSSSST (62 aa)) is leucine repeat I (LRI). The interval 246–315 (LLKFYEFSPW…GGPPPLVRLT (70 aa)) is VHIID. Residues 281-285 (LHILD) carry the VHIID motif. A leucine repeat II (LRII) region spans residues 331–373 (TPFSIGPCGDTFSSGLLGYAQSLNVNLQIKKLDNHPLQTLNAK). The tract at residues 383 to 468 (LIVCAQFRLH…RDSDERKMME (86 aa)) is PFYRE. Residues 471–548 (AAKALTNQRE…QPVSFCSLWK (78 aa)) are SAW.

It belongs to the GRAS family. Expressed in epidermal and cortical root cells.

It localises to the nucleus. In terms of biological role, transcriptional regulator essential for Nod-factor-induced gene expression. Acts downstream of calcium spiking. May be a target of DMI3, a calcium/calmodulin-dependent protein kinase (CCaMK). Is essential for Nod factor-elicited expression of ERN1. Transcription factor involved in the control of strigolactone biosynthesis in roots through the activation of the beta-carotene isomerase D27, which participates in a pathway leading to biosynthesis of strigolactones. The polypeptide is Protein NODULATION SIGNALING PATHWAY 1 (Medicago truncatula (Barrel medic)).